A 525-amino-acid chain; its full sequence is GMP synthase [glutamine-hydrolyzing] (525 aa).

The Glutamine amidotransferase type-1 domain occupies 8–207 (KILILDFGSQ…ALDICGCAAN (200 aa)). Cys-85 (nucleophile) is an active-site residue. Active-site residues include His-181 and Glu-183. Residues 208–400 (WKPSSIIEDA…LGLPYNMLYR (193 aa)) form the GMPS ATP-PPase domain. 235–241 (SGGVDSS) contacts ATP.

As to quaternary structure, homodimer.

The enzyme catalyses XMP + L-glutamine + ATP + H2O = GMP + L-glutamate + AMP + diphosphate + 2 H(+). Its pathway is purine metabolism; GMP biosynthesis; GMP from XMP (L-Gln route): step 1/1. In terms of biological role, catalyzes the synthesis of GMP from XMP. This Shewanella sp. (strain ANA-3) protein is GMP synthase [glutamine-hydrolyzing].